The following is a 423-amino-acid chain: UDP-N-acetylglucosamine 1-carboxyvinyltransferase 2 (423 aa).

Residue 23–24 (KN) coordinates phosphoenolpyruvate. Arginine 96 is a UDP-N-acetyl-alpha-D-glucosamine binding site. The active-site Proton donor is cysteine 120. Position 120 is a 2-(S-cysteinyl)pyruvic acid O-phosphothioketal (cysteine 120). UDP-N-acetyl-alpha-D-glucosamine contacts are provided by residues 125–129 (RPIDL), aspartate 309, and valine 331.

The protein belongs to the EPSP synthase family. MurA subfamily.

The protein localises to the cytoplasm. The enzyme catalyses phosphoenolpyruvate + UDP-N-acetyl-alpha-D-glucosamine = UDP-N-acetyl-3-O-(1-carboxyvinyl)-alpha-D-glucosamine + phosphate. It participates in cell wall biogenesis; peptidoglycan biosynthesis. In terms of biological role, cell wall formation. Adds enolpyruvyl to UDP-N-acetylglucosamine. This is UDP-N-acetylglucosamine 1-carboxyvinyltransferase 2 from Streptococcus agalactiae serotype III (strain NEM316).